A 446-amino-acid chain; its full sequence is Inward rectifier potassium channel 4 (446 aa).

At methionine 1 to tryptophan 55 the chain is on the cytoplasmic side. The helical transmembrane segment at arginine 56–isoleucine 80 threads the bilayer. Residues alanine 81–glycine 120 are Extracellular-facing. A val/Gly/Ala/Pro stretch region spans residues proline 91–alanine 111. The segment at residues phenylalanine 121–glutamine 132 is an intramembrane region (helical; Pore-forming). The segment at residues threonine 133–phenylalanine 139 is an intramembrane region (pore-forming). Residues threonine 134–phenylalanine 139 carry the Selectivity filter motif. Topologically, residues arginine 140–leucine 148 are extracellular. Residues alanine 149 to threonine 170 traverse the membrane as a helical segment. The Cytoplasmic portion of the chain corresponds to isoleucine 171 to isoleucine 446. Residues serine 444–isoleucine 446 carry the PDZ-binding motif.

The protein belongs to the inward rectifier-type potassium channel (TC 1.A.2.1) family. KCNJ4 subfamily. As to quaternary structure, homomultimeric and heteromultimeric association with KCNJ2 and KCNJ12. Interacts with DLG2 and DLG4. Associates, via its PDZ-recognition domain, with a complex containing LIN7A, LIN7B, LIN7C, DLG1, CASK and APBA1. Interacts with TAX1BP3. TAX1BP3 competes with LIN7 family members for KCNJ4 binding. Detected in kidney distal convoluted tubules (at protein level). Widely expressed throughout the brain. Also found in some peripheral tissues.

It localises to the cell membrane. Its subcellular location is the cytoplasmic vesicle membrane. The protein localises to the postsynaptic cell membrane. The enzyme catalyses K(+)(in) = K(+)(out). Functionally, inward rectifier potassium channels are characterized by a greater tendency to allow potassium to flow into the cell rather than out of it. Their voltage dependence is regulated by the concentration of extracellular potassium; as external potassium is raised, the voltage range of the channel opening shifts to more positive voltages. The inward rectification is mainly due to the blockage of outward current by internal magnesium. Can be blocked by extracellular barium and cesium. This Rattus norvegicus (Rat) protein is Inward rectifier potassium channel 4 (Kcnj4).